A 498-amino-acid polypeptide reads, in one-letter code: L-ornithine N(5)-monooxygenase (498 aa).

FAD is bound by residues 80-88 and Gln99; that span reads ERQKQFAWH. Lys104 contributes to the substrate binding site. Residue Val165 participates in FAD binding. NADP(+)-binding positions include 251–254 and Arg276; that span reads SGQS. Substrate-binding positions include 290–293 and Asn320; that span reads NEVF. 320 to 322 lines the NADP(+) pocket; the sequence is NYS. 463–465 serves as a coordination point for FAD; that stretch reads SLL. Residue Ser466 participates in substrate binding.

The protein belongs to the lysine N(6)-hydroxylase/L-ornithine N(5)-oxygenase family. As to quaternary structure, homotetramer. Requires FAD as cofactor.

The enzyme catalyses L-ornithine + NADPH + O2 = N(5)-hydroxy-L-ornithine + NADP(+) + H2O. The catalysed reaction is L-ornithine + NADH + O2 = N(5)-hydroxy-L-ornithine + NAD(+) + H2O. It functions in the pathway siderophore biosynthesis. Functionally, catalyzes the conversion of L-ornithine to N(5)-hydroxyornithine, the first step in the biosynthesis of all hydroxamate-containing siderophores, such as the secreted triacetylfusarinine C (TAFC) involved in iron uptake and the intracellular iron storage compound desferriferricrocin (DFFC). In Emericella nidulans (strain FGSC A4 / ATCC 38163 / CBS 112.46 / NRRL 194 / M139) (Aspergillus nidulans), this protein is L-ornithine N(5)-monooxygenase.